Here is a 165-residue protein sequence, read N- to C-terminus: uncharacterized protein (165 aa).

Residues 22 to 34 (QQANQENMSSRTD) show a composition bias toward polar residues. The disordered stretch occupies residues 22 to 45 (QQANQENMSSRTDSPIPPFGESEQ).

This is an uncharacterized protein from Homo sapiens (Human).